The chain runs to 89 residues: MGIKLINIGFGNIVSANRLVAIVSPESAPIKRIIQEARDRGMLIDATYGRRTRAVIITDSDHVILSAVQPETVAHRLSTKDEVVDEVDE.

This sequence belongs to the RemA family.

The polypeptide is Putative regulatory protein CLL_A1210 (Clostridium botulinum (strain Eklund 17B / Type B)).